The chain runs to 744 residues: C-type polyheme cytochrome OmcB (744 aa).

The first 23 residues, 1–23 (MSRKVTKYSAVLAVSLFAAALAG), serve as a signal peptide directing secretion. Cysteine 24 carries N-palmitoyl cysteine lipidation. Cysteine 24 is lipidated: S-diacylglycerol cysteine. Cysteine 48, cysteine 51, histidine 52, cysteine 81, cysteine 84, histidine 85, cysteine 107, cysteine 110, histidine 111, cysteine 141, cysteine 144, histidine 145, cysteine 185, cysteine 188, histidine 189, cysteine 225, cysteine 228, histidine 229, cysteine 303, cysteine 306, histidine 307, cysteine 382, cysteine 385, histidine 386, cysteine 430, cysteine 433, histidine 434, cysteine 480, cysteine 483, histidine 484, cysteine 555, cysteine 558, histidine 559, cysteine 587, cysteine 590, and histidine 591 together coordinate heme c.

Post-translationally, binds 12 heme c groups per subunit.

The protein resides in the cell outer membrane. In terms of biological role, involved in anaerobic respiration with Fe(3+) as terminal electron acceptor. Acts as an electron-transport mediator in the dissimilatory reduction of Fe(3+). This Geobacter sulfurreducens (strain DL-1 / KN400) protein is C-type polyheme cytochrome OmcB (omcB).